A 1720-amino-acid chain; its full sequence is 6-methylcalicylic acide synthase (1720 aa).

Residues 1-31 (MDKQSASGEIPAMRWEPYHRRDPRNAKELSK) are disordered. In terms of domain architecture, Ketosynthase family 3 (KS3) spans 1–399 (MDKQSASGEI…GTVSHAVIEQ (399 aa)). The segment covering 16–30 (EPYHRRDPRNAKELS) has biased composition (basic and acidic residues). Residues C146, H281, and H321 each act as for beta-ketoacyl synthase activity in the active site. The malonyl-CoA:ACP transacylase (MAT) domain stretch occupies residues 509-823 (VWVFSGHGAQ…IAQLHCRGAE (315 aa)). Residues 868-987 (HTLLGQRIGI…AYWARDIQEA (120 aa)) are N-terminal hotdog fold. The segment at 868-1139 (HTLLGQRIGI…FTAMRFSEIE (272 aa)) is dehydratase (DH) domain. Residues 868-1144 (HTLLGQRIGI…FSEIEGTPGV (277 aa)) form the PKS/mFAS DH domain. H900 serves as the catalytic Proton acceptor; for dehydratase activity. The segment at 1001 to 1144 (GTRIRDDFSI…FSEIEGTPGV (144 aa)) is C-terminal hotdog fold. D1065 serves as the catalytic Proton donor; for dehydratase activity. The interval 1148-1545 (MESLVHQLAW…AVAVQWTSWR (398 aa)) is product template (PT) domain. The Carrier domain maps to 1644 to 1718 (VYLDEKIRGC…HLVGWFAEKV (75 aa)). At S1678 the chain carries O-(pantetheine 4'-phosphoryl)serine.

It localises to the cytoplasm. It is found in the cytosol. The catalysed reaction is 3 malonyl-CoA + acetyl-CoA + NADPH + 3 H(+) = 6-methylsalicylate + 3 CO2 + NADP(+) + 4 CoA + H2O. It participates in mycotoxin biosynthesis; patulin biosynthesis. In terms of biological role, 6-methylsalicylic acid synthase; part of the gene cluster that mediates the biosynthesis of patulin, an acetate-derived tetraketide mycotoxin produced by several fungal species that shows antimicrobial properties against several bacteria. PatK catalyzes the first step of the pathway which is the synthesis of 6-methylsalicylic acid via condensation of 1 acetate and 3 malonate units. The pathway begins with the synthesis of 6-methylsalicylic acid by the polyketide synthase (PKS) patK via condensation of acetate and malonate units. The 6-methylsalicylic acid decarboxylase patG then catalyzes the decarboxylation of 6-methylsalicylic acid to yield m-cresol (also known as 3-methylphenol). These first reactions occur in the cytosol. The intermediate m-cresol is then transported into the endoplasmic reticulum where the cytochrome P450 monooxygenase patH converts it to m-hydroxybenzyl alcohol, which is further converted to gentisyl alcohol by the cytochrome P450 monooxygenase patI. The oxidoreductases patJ and patO further convert gentisyl alcohol to isoepoxydon in the vacuole. PatN catalyzes then the transformation of isoepoxydon into phyllostine. The cluster protein patF is responsible for the conversion from phyllostine to neopatulin whereas the alcohol dehydrogenase patD converts neopatulin to E-ascladiol. The steps between isoepoxydon and E-ascladiol occur in the cytosol, and E-ascladiol is probably secreted to the extracellular space by one of the cluster-specific transporters patC or patM. Finally, the secreted patulin synthase patE catalyzes the conversion of E-ascladiol to patulin. In Aspergillus clavatus (strain ATCC 1007 / CBS 513.65 / DSM 816 / NCTC 3887 / NRRL 1 / QM 1276 / 107), this protein is 6-methylcalicylic acide synthase.